The sequence spans 206 residues: MDEDVLTTLKILIIGESGVGKSSLLLRFTDDTFDPELAATIGVDFKVKTISVDGNKAKLAIWDTAGQERFRTLTPSYYRGAQGVILVYDVTRRDTFVKLDNWLNELETYCTRNDIVNMLVGNKIDKENREVDRNEGLKFARKHSMLFIEASAKTCDGVQCAFEELVEKIIQTPGLWESENQNKGVKLSPREESHGGGACGGYCSVL.

N-acetylmethionine is present on Met1. The GTP site is built by Ser17, Gly20, Lys21, Ser22, Ser23, Asp34, Pro35, Thr40, Gly66, Lys123, and Asp125. Position 22 (Ser22) interacts with Mg(2+). Short sequence motifs (switch) lie at residues 31 to 45 (DTFD…GVDF) and 63 to 80 (DTAG…YYRG). A Mg(2+)-binding site is contributed by Thr40. A Phosphoserine modification is found at Ser144. Residue Ala152 participates in GTP binding. A lipid anchor (S-palmitoyl cysteine) is attached at Cys199. Cys203 is subject to Cysteine methyl ester. Cys203 is lipidated: S-geranylgeranyl cysteine. A propeptide spans 204 to 206 (SVL) (removed in mature form).

Belongs to the small GTPase superfamily. Rab family. As to quaternary structure, interacts (in GTP-bound form) with ZFYVE1. Interacts with ZW10 and this interaction is enhanced in the presence of ZFYVE1. Interacts with BSCL2. It depends on Mg(2+) as a cofactor.

It is found in the endoplasmic reticulum membrane. It localises to the golgi apparatus. Its subcellular location is the cis-Golgi network membrane. The protein resides in the lipid droplet. The protein localises to the apical cell membrane. It catalyses the reaction GTP + H2O = GDP + phosphate + H(+). Its activity is regulated as follows. Regulated by guanine nucleotide exchange factors (GEFs) which promote the exchange of bound GDP for free GTP. Regulated by GTPase activating proteins (GAPs) which increase the GTP hydrolysis activity at the ER membrane. Inhibited by GDP dissociation inhibitors (GDIs) which prevent Rab-GDP dissociation. In terms of biological role, the small GTPases Rab are key regulators of intracellular membrane trafficking, from the formation of transport vesicles to their fusion with membranes. Rabs cycle between an inactive GDP-bound form and an active GTP-bound form that is able to recruit to membranes different sets of downstream effectors directly responsible for vesicle formation, movement, tethering and fusion. RAB18 is required for the localization of ZFYVE1 to lipid droplets and for its function in mediating the formation of endoplasmic reticulum-lipid droplets (ER-LD) contacts. Also required for maintaining endoplasmic reticulum structure. Plays a role in apical endocytosis/recycling. Plays a key role in eye and brain development and neurodegeneration. This is Ras-related protein Rab-18 from Rattus norvegicus (Rat).